Here is a 751-residue protein sequence, read N- to C-terminus: Ribosomal RNA large subunit methyltransferase K/L (751 aa).

The region spanning 44-155 (LAYRTCLWSR…KNKLVLSIDL (112 aa)) is the THUMP domain.

Belongs to the methyltransferase superfamily. RlmKL family.

Its subcellular location is the cytoplasm. It catalyses the reaction guanosine(2445) in 23S rRNA + S-adenosyl-L-methionine = N(2)-methylguanosine(2445) in 23S rRNA + S-adenosyl-L-homocysteine + H(+). It carries out the reaction guanosine(2069) in 23S rRNA + S-adenosyl-L-methionine = N(2)-methylguanosine(2069) in 23S rRNA + S-adenosyl-L-homocysteine + H(+). Functionally, specifically methylates the guanine in position 2445 (m2G2445) and the guanine in position 2069 (m7G2069) of 23S rRNA. The chain is Ribosomal RNA large subunit methyltransferase K/L from Cellvibrio japonicus (strain Ueda107) (Pseudomonas fluorescens subsp. cellulosa).